Here is a 116-residue protein sequence, read N- to C-terminus: Large ribosomal subunit protein bL19 (116 aa).

It belongs to the bacterial ribosomal protein bL19 family.

Functionally, this protein is located at the 30S-50S ribosomal subunit interface and may play a role in the structure and function of the aminoacyl-tRNA binding site. The polypeptide is Large ribosomal subunit protein bL19 (Staphylococcus carnosus (strain TM300)).